Consider the following 219-residue polypeptide: Transmembrane emp24 domain-containing protein 10 (219 aa).

A signal peptide spans Met-1–Ala-31. A required for interaction with STX17 region spans residues Met-1–Glu-142. Residues Ile-32–Arg-185 are Lumenal-facing. A GOLD domain is found at Arg-41 to Ser-193. The tract at residues Leu-147–Thr-178 is required for TMED10 and TMED2 cis-Golgi network localization. A dimethylated arginine mark is found at Arg-171 and Arg-176. Residue Asn-179 is glycosylated (N-linked (GlcNAc...) asparagine). The chain crosses the membrane as a helical span at residues Val-186–Phe-206. The interaction with COPG1 stretch occupies residues Gln-204 to Glu-219. Residues Tyr-207–Glu-219 lie on the Cytoplasmic side of the membrane. The interval Tyr-207–Glu-219 is interaction with ARF1 and IL1B. Residues Phe-211–Phe-212 carry the COPII vesicle coat-binding motif. Positions Phe-211–Glu-219 match the COPI vesicle coat-binding motif.

Belongs to the EMP24/GP25L family. As to quaternary structure, predominantly dimeric and to a lesser extent monomeric in the ER. Monomer and dimer in ERGIC and cis-Golgi network. Forms homooligomer (via GOLD domain); the assembly is promoted by direct binding with leaderless cargos and may form a protein channel that facilitates cargo entry into the ERGIC. Forms heterooligomeric complexes with other members of the p24 family such as TMED2, TMED7 and TMED9. Interacts (via GOLD domain) with TMED2 (via GOLD domain); the complex is required for export of TMED10 from the ER to the cis-Golgi network; the complex is proposed to be involved in cis-Golgi network dynamics and / or biogenesis. Associates with the COPI vesicle coat subunits (coatomer). Tetramerization of the cytoplasmic domain at the Golgi membrane in vitro; the complex is proposed to interact with COPI coatomer and induce budding of the vesicles. Interacts with COPG1; the interaction involves TMED10 homodimer. Interacts with ARF1 (GDP-bound); the interaction probably involves a TMED10 oligomer. Interacts with SEC23A, SEC24B, SEC24C and SEC24D components of the coat protein complex II/COPII, indicative of an association of TMED10 with the COPII vesicle coat. Interacts with CD59. Interacts with MPPE1/PGAP5; the complex might recruit and sort GPI-anchored proteins to the ER-exit site, or the interaction might lead to recycling of PGAP5 between the ER and the Golgi. Interacts with F2LR1/PAR2. Interacts with KDELR2/ERD2; the interaction is disrupted by KDELR2 ligand. Found in a complex composed at least of SURF4, TMED2 and TMED10. Associates with the presenilin-dependent gamma-secretase complex. Interacts with STX17; the interaction is direct. Interacts with IL-1; the interaction is direct. Interacts with RAB21 (active GTP-bound form); the interaction is indirect and regulates TMED10 abundance and localization at the Golgi.

It is found in the endoplasmic reticulum membrane. Its subcellular location is the endoplasmic reticulum-Golgi intermediate compartment membrane. The protein resides in the golgi apparatus membrane. It localises to the golgi apparatus. The protein localises to the cis-Golgi network membrane. It is found in the trans-Golgi network membrane. Its subcellular location is the cytoplasmic vesicle. The protein resides in the secretory vesicle membrane. It localises to the cell membrane. The protein localises to the melanosome. Its function is as follows. Cargo receptor involved in protein vesicular trafficking and quality control in the endoplasmic reticulum (ER) and Golgi. The p24 protein family is a group of transmembrane proteins that bind coat protein complex I/COPI and coat protein complex II/COPII involved in vesicular trafficking between the membranes. Acts at the lumenal side for incorporation of secretory cargo molecules into transport vesicles and involved in vesicle coat formation at the cytoplasmic side. Mainly functions in the early secretory pathway and cycles between the ER, ER-Golgi intermediate compartment (ERGIC) and Golgi, mediating cargo transport through COPI and COPII-coated vesicles. In COPII vesicle-mediated anterograde transport, involved in the transport of GPI-anchored proteins by acting together with TMED2 as their cargo receptor; the function specifically implies SEC24C and SEC24D of the COPII vesicle coat and lipid raft-like microdomains of the ER. Recognizes GPI anchors structural remodeled in the ER by the GPI inositol-deacylase/PGAP1 and the metallophosphoesterase MPPE1/PGAP5. In COPI vesicle-mediated retrograde transport, involved in the biogenesis of COPI vesicles and vesicle coat recruitment. Involved in trafficking of amyloid beta A4 protein and soluble APP-beta release (independent from the modulation of gamma-secretase activity). Involved in the KDELR2-mediated retrograde transport of the toxin A subunit (CTX-A-K63)together with COPI and the COOH terminus of KDELR2. On Golgi membranes, acts as a primary receptor for ARF1-GDP, a GTP-binding protein involved in COPI-vesicle formation. Increases coatomer-dependent GTPase-activating activity of ARFGAP2 which mediates the hydrolysis of ARF1-bound GTP and therefore modulates protein trafficking from the Golgi apparatus. Involved in the exocytic trafficking of G protein-coupled receptors F2LR1/PAR2 (trypsin and tryspin-like enzyme receptor), OPRM1 (opioid receptor) and P2RY4 (UTD and UDP receptor) from the Golgi to the plasma membrane, thus contributing to receptor resensitization. In addition to its cargo receptor activity, may also act as a protein channel after oligomerization, facilitating the post-translational entry of leaderless cytoplasmic cargo into the ERGIC. Involved in the translocation into ERGIC, the vesicle entry and the secretion of leaderless cargos (lacking the secretion signal sequence), including the mature form of interleukin 1/IL-1 family members, the alpha-crystallin B chain HSPB5, the carbohydrate-binding proteins galectin-1/LGALS1 and galectin-3/LGALS3, the microtubule-associated protein Tau/MAPT, and the annexin A1/ANXA1; the translocation process is dependent on cargo protein unfolding and enhanced by chaperones HSP90AB1 and HSP90B1/GRP9. Could also associates with the presenilin-dependent gamma-secretase complex in order to regulate gamma-cleavages of the amyloid beta A4 protein to yield amyloid-beta 40/Abeta40. The chain is Transmembrane emp24 domain-containing protein 10 (TMED10) from Mesocricetus auratus (Golden hamster).